The sequence spans 390 residues: 4-hydroxy-3-methylbut-2-en-1-yl diphosphate synthase (flavodoxin) (390 aa).

[4Fe-4S] cluster is bound by residues Cys281, Cys284, Cys316, and Glu323.

The protein belongs to the IspG family. It depends on [4Fe-4S] cluster as a cofactor.

The enzyme catalyses (2E)-4-hydroxy-3-methylbut-2-enyl diphosphate + oxidized [flavodoxin] + H2O + 2 H(+) = 2-C-methyl-D-erythritol 2,4-cyclic diphosphate + reduced [flavodoxin]. Its pathway is isoprenoid biosynthesis; isopentenyl diphosphate biosynthesis via DXP pathway; isopentenyl diphosphate from 1-deoxy-D-xylulose 5-phosphate: step 5/6. Functionally, converts 2C-methyl-D-erythritol 2,4-cyclodiphosphate (ME-2,4cPP) into 1-hydroxy-2-methyl-2-(E)-butenyl 4-diphosphate. The polypeptide is 4-hydroxy-3-methylbut-2-en-1-yl diphosphate synthase (flavodoxin) (Salinispora tropica (strain ATCC BAA-916 / DSM 44818 / JCM 13857 / NBRC 105044 / CNB-440)).